We begin with the raw amino-acid sequence, 625 residues long: Histone-lysine N-methyltransferase set9 (625 aa).

Residues 120–234 (SPFEVTTTNR…IGEEITVSYG (115 aa)) form the SET domain. Disordered regions lie at residues 260–348 (PHVD…ETSI), 368–405 (GSAVEVSQASATDCDSSPSLEADESHHSSTSTTPTSIG), 432–451 (ITGQPHNDRHPPGTDNDMLS), 457–476 (TDNPQKPKRSRGSRWKHGVV), and 582–625 (VSFG…RMTM). Composition is skewed to polar residues over residues 269–286 (SKASTPALNDEAISNDSL) and 372–386 (EVSQASATDCDSSPS). The segment covering 462-473 (KPKRSRGSRWKH) has biased composition (basic residues). The segment covering 593 to 610 (SEPRTETEDSEACDDRRN) has biased composition (basic and acidic residues). Over residues 611–625 (TRASRTRTRSLRMTM) the composition is skewed to basic residues.

This sequence belongs to the class V-like SAM-binding methyltransferase superfamily. Histone-lysine methyltransferase family. Suvar4-20 subfamily.

The protein localises to the nucleus. The protein resides in the chromosome. It carries out the reaction L-lysyl(20)-[histone H4] + 3 S-adenosyl-L-methionine = N(6),N(6),N(6)-trimethyl-L-lysyl(20)-[histone H4] + 3 S-adenosyl-L-homocysteine + 3 H(+). Its function is as follows. Histone methyltransferase that trimethylates 'Lys-20' of histone H4 to form H4K20me3. This Aspergillus oryzae (strain ATCC 42149 / RIB 40) (Yellow koji mold) protein is Histone-lysine N-methyltransferase set9 (set9).